The sequence spans 197 residues: Adenylylsulfatase HINT3 (197 aa).

The segment at 14-43 is disordered; it reads NPPGPNPTRDPTLRVSDCSSGSSGDGKVES. An HIT domain is found at 51 to 158; it reads VFCKIIRGES…IPRKERDCLW (108 aa). The Histidine triad motif signature appears at 143–147; the sequence is HTHIH. The active-site Tele-AMP-histidine intermediate is His145. His147 is a substrate binding site.

The protein localises to the peroxisome. The enzyme catalyses adenosine 5'-phosphosulfate + H2O = sulfate + AMP + 2 H(+). In terms of biological role, possesses adenylylsulfatase activity in vitro. This Arabidopsis thaliana (Mouse-ear cress) protein is Adenylylsulfatase HINT3.